A 96-amino-acid polypeptide reads, in one-letter code: Co-chaperonin GroES (96 aa).

It belongs to the GroES chaperonin family. As to quaternary structure, heptamer of 7 subunits arranged in a ring. Interacts with the chaperonin GroEL.

The protein resides in the cytoplasm. In terms of biological role, together with the chaperonin GroEL, plays an essential role in assisting protein folding. The GroEL-GroES system forms a nano-cage that allows encapsulation of the non-native substrate proteins and provides a physical environment optimized to promote and accelerate protein folding. GroES binds to the apical surface of the GroEL ring, thereby capping the opening of the GroEL channel. The polypeptide is Co-chaperonin GroES (Solidesulfovibrio magneticus (strain ATCC 700980 / DSM 13731 / RS-1) (Desulfovibrio magneticus)).